A 765-amino-acid chain; its full sequence is Complement factor B (765 aa).

The signal sequence occupies residues 1-25 (MGSNRCPRLGLVPLILGLLSGGVSM). 3 Sushi domains span residues 35–100 (SPCS…ECKA), 101–160 (IRCP…ICDD), and 163–220 (GYCP…SCQD). 6 cysteine pairs are disulfide-bonded: Cys-37–Cys-76, Cys-62–Cys-98, Cys-103–Cys-145, Cys-131–Cys-158, Cys-165–Cys-205, and Cys-191–Cys-218. N-linked (GlcNAc...) asparagine glycans are attached at residues Asn-122 and Asn-142. The 200-residue stretch at 270-469 (NIYLVLDGSD…NLEDVFFQML (200 aa)) folds into the VWFA domain. Residues Ser-278 and Ser-280 each coordinate Mg(2+). A glycan (N-linked (GlcNAc...) asparagine) is linked at Asn-285. A Mg(2+)-binding site is contributed by Thr-353. A glycan (N-linked (GlcNAc...) asparagine) is linked at Asn-378. Positions 477–758 (LCGMVWEHKD…VLPWLKEKLK (282 aa)) constitute a Peptidase S1 domain. Intrachain disulfides connect Cys-478–Cys-596, Cys-511–Cys-527, Cys-599–Cys-615, Cys-660–Cys-686, and Cys-699–Cys-729. Residues His-526 and Asp-576 each act as charge relay system in the active site. Ser-703 (charge relay system) is an active-site residue.

This sequence belongs to the peptidase S1 family. As to quaternary structure, monomer. Interacts with complement C3b; this interaction is dependent on the presence of Mg(2+). In terms of assembly, catalytic component of the C3 convertase of the alternative complement pathway, also named C3bBb, composed of complement factor B Bb and complement C3b. Catalytic component of the C5 convertase of the alternative complement pathway, also named C3bBb3b, composed of complement factor B Bb and additional molecules of complement C3b. Interacts to CFP; this interaction contributes to the stabilization of the active C3-convertase enzyme complex. Mg(2+) is required as a cofactor. Mn(2+) serves as cofactor. Post-translationally, cleaved by CFD following activation of the alternative complement system, generating Ba and Bb chains. Cleavage and activation takes place when CFB is already associated with complement C3b.

Its subcellular location is the secreted. The protein resides in the cell surface. The enzyme catalyses Cleavage of Arg-|-Ser bond in complement component C3 alpha-chain to yield C3a and C3b, and Arg-|-Xaa bond in complement component C5 alpha-chain to yield C5a and C5b.. Its function is as follows. Precursor of the catalytic component of the C3 and C5 convertase complexes of the alternative pathway of the complement system, a cascade of proteins that leads to phagocytosis and breakdown of pathogens and signaling that strengthens the adaptive immune system. The alternative complement pathway acts as an amplification loop that enhances other complement pathways (classical, lectin and GZMK) by promoting formation of additional C3 and C5 convertases. CFB is cleaved and activated by CFD to generate Ba and Bb chains; Bb chain constituting the catalytic component of the C3 and C5 convertases. Functionally, serine protease component of the complement C3 and C5 convertase complexes of the alternative complement pathway. Following cleavage and activation by factor D (CFD), forms the C3 convertase together with complement C3b. As part of the C3 convertase, cleaves and activates C3 into C3a anaphylatoxin and C3b opsonin, the next components of the complement pathways. When an additional complement C3b molecule binds to the C3 convertase, forms the C5 convertase, which cleaves and activates C5 into C5a anaphylatoxin and C5b component of the membrane attack complex. In terms of biological role, involved in proliferation and differentiation of preactivated B-lymphocytes, rapid spreading of peripheral blood monocytes, stimulation of lymphocyte blastogenesis and lysis of erythrocytes. The polypeptide is Complement factor B (CFB) (Sus scrofa (Pig)).